A 192-amino-acid polypeptide reads, in one-letter code: UPF0312 protein Psyr_0457 (192 aa).

The signal sequence occupies residues 1-23; that stretch reads MLKKSLAALALGTALLSAGQAMA.

Belongs to the UPF0312 family. Type 1 subfamily.

The protein localises to the periplasm. This Pseudomonas syringae pv. syringae (strain B728a) protein is UPF0312 protein Psyr_0457.